We begin with the raw amino-acid sequence, 221 residues long: MAKQNLELKATSFTLSVLHINHNDLDIIAAELDNKLAQAPQFFLGAPLVLNLSAIQHTHIDFNALKQLLIDRNLIIVGITDASAEQIEQAKSMAIAVVKSGKQARKAELPERATKIVKQNVRSGQQIYAQNADLIIFGAVGNGAEVIADGSIHIYGALRGKAMAGAAGDNQSVIIANSLEAELVSIAGQYWLTEHLQQYDLSQRGCVRLEGASLTVESLPQ.

Belongs to the MinC family. Interacts with MinD and FtsZ.

Functionally, cell division inhibitor that blocks the formation of polar Z ring septums. Rapidly oscillates between the poles of the cell to destabilize FtsZ filaments that have formed before they mature into polar Z rings. Prevents FtsZ polymerization. The protein is Probable septum site-determining protein MinC of Shewanella frigidimarina (strain NCIMB 400).